The sequence spans 305 residues: MRLVVVAGPTASGKTALAIALARRLGGEIVNADSQQVYRGLDVGTAKPTAEERGAAPHHLLDLVEPGEGMDAARFAALADAAIAGIAARGRVPIVAGGTGLYVRALLHGVVEAPGRDPALRAALEEEAARLGRPAVHARLAAVDPAAAERIRPNDLVRVVRALEIAAGGRTPSELYQAHAFREDRYDAALLALDPPRAELHARIDARVRAMFAGGLLDEARALEARFVGALPARLPIGYAEAAAHLRGELDLEEAIRRVQVAHRRYARRQVIWLRRERGVAWIAPPHDVEALSRRVLEPRPPAIR.

8 to 15 contacts ATP; it reads GPTASGKT. A substrate-binding site is contributed by 10–15; that stretch reads TASGKT. An interaction with substrate tRNA region spans residues 33-36; that stretch reads DSQQ.

The protein belongs to the IPP transferase family. In terms of assembly, monomer. It depends on Mg(2+) as a cofactor.

It catalyses the reaction adenosine(37) in tRNA + dimethylallyl diphosphate = N(6)-dimethylallyladenosine(37) in tRNA + diphosphate. Functionally, catalyzes the transfer of a dimethylallyl group onto the adenine at position 37 in tRNAs that read codons beginning with uridine, leading to the formation of N6-(dimethylallyl)adenosine (i(6)A). This chain is tRNA dimethylallyltransferase, found in Anaeromyxobacter dehalogenans (strain 2CP-1 / ATCC BAA-258).